We begin with the raw amino-acid sequence, 221 residues long: Small ribosomal subunit protein uS5 (221 aa).

Positions M1–A40 are disordered. Over residues D18–A40 the composition is skewed to basic and acidic residues. The S5 DRBM domain occupies Y45–V108.

Belongs to the universal ribosomal protein uS5 family. Part of the 30S ribosomal subunit. Contacts proteins S4 and S8.

With S4 and S12 plays an important role in translational accuracy. Its function is as follows. Located at the back of the 30S subunit body where it stabilizes the conformation of the head with respect to the body. The chain is Small ribosomal subunit protein uS5 from Mycobacteroides abscessus (strain ATCC 19977 / DSM 44196 / CCUG 20993 / CIP 104536 / JCM 13569 / NCTC 13031 / TMC 1543 / L948) (Mycobacterium abscessus).